Consider the following 418-residue polypeptide: UDP-N-acetylglucosamine 1-carboxyvinyltransferase 1 (418 aa).

22–23 (KN) is a binding site for phosphoenolpyruvate. Arginine 94 provides a ligand contact to UDP-N-acetyl-alpha-D-glucosamine. Cysteine 118 acts as the Proton donor in catalysis. Cysteine 118 carries the post-translational modification 2-(S-cysteinyl)pyruvic acid O-phosphothioketal. UDP-N-acetyl-alpha-D-glucosamine-binding positions include 123–127 (RPIDL), aspartate 306, and isoleucine 328.

The protein belongs to the EPSP synthase family. MurA subfamily.

Its subcellular location is the cytoplasm. It catalyses the reaction phosphoenolpyruvate + UDP-N-acetyl-alpha-D-glucosamine = UDP-N-acetyl-3-O-(1-carboxyvinyl)-alpha-D-glucosamine + phosphate. It functions in the pathway cell wall biogenesis; peptidoglycan biosynthesis. In terms of biological role, cell wall formation. Adds enolpyruvyl to UDP-N-acetylglucosamine. The sequence is that of UDP-N-acetylglucosamine 1-carboxyvinyltransferase 1 from Clostridium acetobutylicum (strain ATCC 824 / DSM 792 / JCM 1419 / IAM 19013 / LMG 5710 / NBRC 13948 / NRRL B-527 / VKM B-1787 / 2291 / W).